The primary structure comprises 118 residues: Small ribosomal subunit protein uS13 (118 aa).

Residues 94–118 (GLPVRGQRTKTNARTRKGPRKPIKK) are disordered.

This sequence belongs to the universal ribosomal protein uS13 family. In terms of assembly, part of the 30S ribosomal subunit. Forms a loose heterodimer with protein S19. Forms two bridges to the 50S subunit in the 70S ribosome.

Its function is as follows. Located at the top of the head of the 30S subunit, it contacts several helices of the 16S rRNA. In the 70S ribosome it contacts the 23S rRNA (bridge B1a) and protein L5 of the 50S subunit (bridge B1b), connecting the 2 subunits; these bridges are implicated in subunit movement. Contacts the tRNAs in the A and P-sites. In Edwardsiella ictaluri (strain 93-146), this protein is Small ribosomal subunit protein uS13.